Here is a 334-residue protein sequence, read N- to C-terminus: Ephrin-B1 (334 aa).

The signal sequence occupies residues 1–25 (MARPRGGRWLLGVLLALCRLAAPLA). Residues 26-160 (KSLEPVSWSA…TRSMKIVMKV (135 aa)) form the Ephrin RBD domain. Topologically, residues 26–231 (KSLEPVSWSA…FLSSKVAVFA (206 aa)) are extracellular. Disulfide bonds link Cys-60–Cys-97 and Cys-85–Cys-149. The N-linked (GlcNAc...) asparagine glycan is linked to Asn-135. Residues 175-218 (SRPSKEADNTVKIVTQSPRHKVPTVEEPGKPGSVNQNGQETQGP) form a disordered region. Residues 207-218 (SVNQNGQETQGP) are compositionally biased toward polar residues. The helical transmembrane segment at 232–252 (AIGAGCVIFILIIIFLVVLLI) threads the bilayer. At 253–334 (KIRKRHRKHT…QSPANIYYKV (82 aa)) the chain is on the cytoplasmic side. Positions 332–334 (YKV) match the PDZ-binding motif.

Belongs to the ephrin family. As to quaternary structure, binds to the receptor tyrosine kinase EPHB2. Interacts with GRIP1 and GRIP2. Post-translationally, inducible phosphorylation of tyrosine residues in the cytoplasmic domain.

Its subcellular location is the membrane. In terms of biological role, cell surface transmembrane ligand for Eph receptors, a family of receptor tyrosine kinases which are crucial for migration, repulsion and adhesion during neuronal, vascular and epithelial development. Binds promiscuously Eph receptors residing on adjacent cells, leading to contact-dependent bidirectional signaling into neighboring cells. The signaling pathway downstream of the receptor is referred to as forward signaling while the signaling pathway downstream of the ephrin ligand is referred to as reverse signaling. This Gallus gallus (Chicken) protein is Ephrin-B1 (EFNB1).